The following is an 859-amino-acid chain: Nitrate reductase [NADPH] (859 aa).

A Mo-molybdopterin-binding site is contributed by Cys137. A Cytochrome b5 heme-binding domain is found at 502–578 (DVVIKYSEFE…LPSMHLGRLE (77 aa)). Heme is bound by residues His538 and His561. In terms of domain architecture, FAD-binding FR-type spans 602–713 (RKWHKITLAE…KGPVGEFEYV (112 aa)). FAD-binding positions include 655–658 (RAYT), 672–676 (LIKVY), Phe677, 687–689 (IMT), Ser737, and Thr740. An NADP(+)-binding site is contributed by 829 to 838 (MLLVCGPPGM).

It belongs to the nitrate reductase family. As to quaternary structure, homodimer. It depends on FAD as a cofactor. Heme serves as cofactor. The cofactor is Mo-molybdopterin.

The enzyme catalyses nitrite + NADP(+) + H2O = nitrate + NADPH + H(+). Functionally, nitrate reductase is a key enzyme involved in the first step of nitrate assimilation in plants, fungi and bacteria. This is Nitrate reductase [NADPH] (YNR1) from Pichia angusta (Yeast).